The following is a 194-amino-acid chain: AP-3 complex subunit sigma (194 aa).

The protein belongs to the adaptor complexes small subunit family. As to quaternary structure, adaptor protein complex 3 (AP-3) is a heterotetramer composed of 2 large adaptins (APL5 and APL6), a medium adaptin (APM3) and a small adaptin (APS3).

The protein resides in the golgi apparatus. It is found in the cytoplasmic vesicle membrane. Functionally, part of the AP-3 complex, an adaptor-related complex which is not clathrin-associated. The complex is associated with the Golgi region as well as more peripheral structures. It facilitates the budding of vesicles from the Golgi membrane and may be directly involved in trafficking to the vacuole. Required for the transport via the ALP pathway, which directs the transport of the cargo proteins PHO8 and VAM3 to the vacuole. In Saccharomyces cerevisiae (strain ATCC 204508 / S288c) (Baker's yeast), this protein is AP-3 complex subunit sigma (APS3).